Reading from the N-terminus, the 88-residue chain is Small ribosomal subunit protein bS20 (88 aa).

The protein belongs to the bacterial ribosomal protein bS20 family.

Its function is as follows. Binds directly to 16S ribosomal RNA. This is Small ribosomal subunit protein bS20 from Clostridium botulinum (strain 657 / Type Ba4).